The primary structure comprises 227 residues: Bone marrow proteoglycan (227 aa).

The first 16 residues, 1–16 (MKFPLLLALLVGGAFA), serve as a signal peptide directing secretion. The propeptide at 17–110 (LHLSSEASDS…TSLMGDSGFK (94 aa)) is acidic. A disordered region spans residues 21–105 (SEASDSKSPL…KEEDTTSLMG (85 aa)). O-linked (GalNAc...) serine glycosylation occurs at Ser-24. Residues 34–46 (SLPREAEISRPEV) show a composition bias toward basic and acidic residues. Over residues 58–70 (LEEEEEEEEEEGS) the composition is skewed to acidic residues. A glycan (O-linked (Xyl...) (chondroitin sulfate) serine) is linked at Ser-70. The region spanning 128–227 (LVCRSCYRGT…GKRRPFICAY (100 aa)) is the C-type lectin domain. 2 disulfide bridges follow: Cys-130–Cys-225 and Cys-202–Cys-217.

Nitrated.

The protein resides in the secreted. Cytotoxin and helminthotoxin. MBP also induces non-cytolytic histamine release from basophils. It is involved in antiparasitic defense mechanisms and immune hypersensitivity reactions. The chain is Bone marrow proteoglycan (Prg2) from Rattus norvegicus (Rat).